Consider the following 310-residue polypeptide: Putative S-adenosyl-L-methionine-dependent methyltransferase ML2640 (310 aa).

Residues Asp-132 and 161-162 (DL) each bind S-adenosyl-L-methionine.

It belongs to the UPF0677 family.

Functionally, exhibits S-adenosyl-L-methionine-dependent methyltransferase activity. The sequence is that of Putative S-adenosyl-L-methionine-dependent methyltransferase ML2640 from Mycobacterium leprae (strain TN).